The primary structure comprises 569 residues: Glutamyl-tRNA reductase (569 aa).

Substrate is bound by residues 49–52 (TCNR), Ser109, 114–116 (EGQ), and Gln120. Cys50 (nucleophile) is an active-site residue. NADP(+) is bound at residue 192-197 (GAGSMS). The segment at 284–397 (PVAVREETPA…VEAPRPAPAL (114 aa)) is insert. A disordered region spans residues 546 to 569 (AAVSRADDRDTSDSTENAKNRGRE). A compositionally biased stretch (basic and acidic residues) spans 550 to 569 (RADDRDTSDSTENAKNRGRE).

It belongs to the glutamyl-tRNA reductase family. As to quaternary structure, homodimer.

It carries out the reaction (S)-4-amino-5-oxopentanoate + tRNA(Glu) + NADP(+) = L-glutamyl-tRNA(Glu) + NADPH + H(+). The protein operates within porphyrin-containing compound metabolism; protoporphyrin-IX biosynthesis; 5-aminolevulinate from L-glutamyl-tRNA(Glu): step 1/2. Functionally, catalyzes the NADPH-dependent reduction of glutamyl-tRNA(Glu) to glutamate 1-semialdehyde (GSA). The chain is Glutamyl-tRNA reductase from Streptomyces avermitilis (strain ATCC 31267 / DSM 46492 / JCM 5070 / NBRC 14893 / NCIMB 12804 / NRRL 8165 / MA-4680).